We begin with the raw amino-acid sequence, 211 residues long: Histidine biosynthesis bifunctional protein HisIE (211 aa).

Residues 1 to 107 (MNKLIDFSKG…FNSEIESRFK (107 aa)) are phosphoribosyl-AMP cyclohydrolase. Residues 108–211 (IQALAQTIHQ…KGERKKVQEW (104 aa)) form a phosphoribosyl-ATP pyrophosphohydrolase region.

The protein in the N-terminal section; belongs to the PRA-CH family. In the C-terminal section; belongs to the PRA-PH family.

It is found in the cytoplasm. It carries out the reaction 1-(5-phospho-beta-D-ribosyl)-ATP + H2O = 1-(5-phospho-beta-D-ribosyl)-5'-AMP + diphosphate + H(+). The enzyme catalyses 1-(5-phospho-beta-D-ribosyl)-5'-AMP + H2O = 1-(5-phospho-beta-D-ribosyl)-5-[(5-phospho-beta-D-ribosylamino)methylideneamino]imidazole-4-carboxamide. Its pathway is amino-acid biosynthesis; L-histidine biosynthesis; L-histidine from 5-phospho-alpha-D-ribose 1-diphosphate: step 2/9. It participates in amino-acid biosynthesis; L-histidine biosynthesis; L-histidine from 5-phospho-alpha-D-ribose 1-diphosphate: step 3/9. The protein is Histidine biosynthesis bifunctional protein HisIE of Staphylococcus epidermidis (strain ATCC 12228 / FDA PCI 1200).